The primary structure comprises 334 residues: Glucosyltransferase 3 (334 aa).

Residues threonine 16, arginine 179, and serine 249–threonine 254 each bind UDP.

This sequence belongs to the Gtf3 glucosyltransferase family. In terms of assembly, homotetramer; a dimer of dimers.

Its pathway is protein modification; protein glycosylation. In terms of biological role, required for polymorphic O-glycosylation of the serine-rich repeat protein in this bacteria. Catalyzes the second step in glycosylation by transferring glucose from UDP-glucose to the terminal GlcNAc moiety of the 3-O-(N-acetyl-alpha-D-glucosaminyl)-L-seryl-[protein] resulting from the first glycosylation step. Part of the accessory SecA2/SecY2 system specifically required to export GspB, a serine-rich repeat cell wall protein encoded upstream in the same operon. The protein is Glucosyltransferase 3 of Streptococcus gordonii.